Reading from the N-terminus, the 365-residue chain is DNA polymerase IV (365 aa).

Positions 7–188 (IIHIDMDAFY…LPVNKFFGVG (182 aa)) constitute a UmuC domain. Mg(2+) contacts are provided by Asp11 and Asp106. The active site involves Glu107.

The protein belongs to the DNA polymerase type-Y family. As to quaternary structure, monomer. Mg(2+) serves as cofactor.

The protein resides in the cytoplasm. The enzyme catalyses DNA(n) + a 2'-deoxyribonucleoside 5'-triphosphate = DNA(n+1) + diphosphate. Functionally, poorly processive, error-prone DNA polymerase involved in untargeted mutagenesis. Copies undamaged DNA at stalled replication forks, which arise in vivo from mismatched or misaligned primer ends. These misaligned primers can be extended by PolIV. Exhibits no 3'-5' exonuclease (proofreading) activity. May be involved in translesional synthesis, in conjunction with the beta clamp from PolIII. This chain is DNA polymerase IV, found in Clostridioides difficile (strain 630) (Peptoclostridium difficile).